Here is a 442-residue protein sequence, read N- to C-terminus: 3-phosphoshikimate 1-carboxyvinyltransferase (442 aa).

Positions 25, 26, and 30 each coordinate 3-phosphoshikimate. Position 25 (K25) interacts with phosphoenolpyruvate. G97 and R125 together coordinate phosphoenolpyruvate. Residues S170, Q172, D323, and K350 each coordinate 3-phosphoshikimate. Q172 lines the phosphoenolpyruvate pocket. Residue D323 is the Proton acceptor of the active site. Positions 354 and 399 each coordinate phosphoenolpyruvate.

The protein belongs to the EPSP synthase family. Monomer.

It localises to the cytoplasm. It carries out the reaction 3-phosphoshikimate + phosphoenolpyruvate = 5-O-(1-carboxyvinyl)-3-phosphoshikimate + phosphate. It participates in metabolic intermediate biosynthesis; chorismate biosynthesis; chorismate from D-erythrose 4-phosphate and phosphoenolpyruvate: step 6/7. Catalyzes the transfer of the enolpyruvyl moiety of phosphoenolpyruvate (PEP) to the 5-hydroxyl of shikimate-3-phosphate (S3P) to produce enolpyruvyl shikimate-3-phosphate and inorganic phosphate. The protein is 3-phosphoshikimate 1-carboxyvinyltransferase of Bartonella henselae (strain ATCC 49882 / DSM 28221 / CCUG 30454 / Houston 1) (Rochalimaea henselae).